The primary structure comprises 288 residues: L-threonine kinase (288 aa).

Pro80–Ala90 contributes to the ATP binding site.

Belongs to the GHMP kinase family. PduX subfamily.

It is found in the cytoplasm. The enzyme catalyses L-threonine + ATP = O-phospho-L-threonine + ADP + H(+). The protein operates within cofactor biosynthesis; adenosylcobalamin biosynthesis. Its pathway is polyol metabolism; 1,2-propanediol degradation. Its function is as follows. L-threonine kinase that catalyzes the conversion of L-threonine to L-threonine-O-3-phosphate. Involved in the de novo synthesis of adenosylcobalamin (coenzyme B12) and the assimilation of cobyric acid. In terms of biological role, expression of a cosmid containing the full 21-gene pdu operon in E.coli allows E.coli to grow on 1,2-propanediol (1,2-PD) with the appearance of bacterial microcompartments (BMC) in its cytoplasm. Functionally, the 1,2-PD-specific bacterial microcompartment (BMC) concentrates low levels of 1,2-PD catabolic enzymes, concentrates volatile reaction intermediates thus enhancing pathway flux and keeps the level of toxic, mutagenic propionaldehyde low. This gene probably benefits from its induction via the Pdu promoter, rather than a physical interaction with the BMC. This Citrobacter freundii protein is L-threonine kinase.